The primary structure comprises 89 residues: Small ribosomal subunit protein bS20 (89 aa).

This sequence belongs to the bacterial ribosomal protein bS20 family.

Its function is as follows. Binds directly to 16S ribosomal RNA. This Helicobacter acinonychis (strain Sheeba) protein is Small ribosomal subunit protein bS20.